A 636-amino-acid polypeptide reads, in one-letter code: Carbon monoxide dehydrogenase 1 (636 aa).

Positions 38, 46, 47, 50, 55, and 69 each coordinate [4Fe-4S] cluster. [Ni-4Fe-5S] cluster-binding residues include H262, C297, C335, C448, C478, and C528.

It belongs to the Ni-containing carbon monoxide dehydrogenase family. As to quaternary structure, homodimer. The cofactor is [4Fe-4S] cluster. [Ni-4Fe-5S] cluster is required as a cofactor.

It localises to the cytoplasm. The protein resides in the cell membrane. It carries out the reaction CO + 2 oxidized [2Fe-2S]-[ferredoxin] + H2O = 2 reduced [2Fe-2S]-[ferredoxin] + CO2 + 2 H(+). Its activity is regulated as follows. Inactivated by O(2). CODH oxidizes carbon monoxide coupled, via CooF, to the reduction of a hydrogen cation by a hydrogenase (possibly CooH). This is Carbon monoxide dehydrogenase 1 (cooS1) from Carboxydothermus hydrogenoformans (strain ATCC BAA-161 / DSM 6008 / Z-2901).